The sequence spans 248 residues: UDP-2,3-diacylglucosamine hydrolase (248 aa).

Residues Asp-7, His-9, Asp-40, Asn-78, and His-113 each coordinate Mn(2+). 78-79 (NR) is a substrate binding site. Substrate is bound by residues Asp-121, Ser-159, Thr-163, Lys-166, and His-194. Mn(2+)-binding residues include His-194 and His-196.

This sequence belongs to the LpxH family. It depends on Mn(2+) as a cofactor.

It is found in the cell inner membrane. It carries out the reaction UDP-2-N,3-O-bis[(3R)-3-hydroxytetradecanoyl]-alpha-D-glucosamine + H2O = 2-N,3-O-bis[(3R)-3-hydroxytetradecanoyl]-alpha-D-glucosaminyl 1-phosphate + UMP + 2 H(+). Its pathway is glycolipid biosynthesis; lipid IV(A) biosynthesis; lipid IV(A) from (3R)-3-hydroxytetradecanoyl-[acyl-carrier-protein] and UDP-N-acetyl-alpha-D-glucosamine: step 4/6. Hydrolyzes the pyrophosphate bond of UDP-2,3-diacylglucosamine to yield 2,3-diacylglucosamine 1-phosphate (lipid X) and UMP by catalyzing the attack of water at the alpha-P atom. Involved in the biosynthesis of lipid A, a phosphorylated glycolipid that anchors the lipopolysaccharide to the outer membrane of the cell. The chain is UDP-2,3-diacylglucosamine hydrolase from Pseudomonas syringae pv. syringae (strain B728a).